Here is a 362-residue protein sequence, read N- to C-terminus: HMG box-containing protein C19G7.04 (362 aa).

Residues 135 to 299 (KCFLARLEDE…RLCKSQIKQI (165 aa)) enclose the SprT-like domain. The HMG box DNA-binding region spans 306-348 (PNAFQIFLKENSKRLRKLHPHITHKELMKKLSDEYHRTKDAKQ).

It is found in the nucleus. Its subcellular location is the cytoplasm. The protein localises to the cytoskeleton. The protein resides in the spindle. This is HMG box-containing protein C19G7.04 from Schizosaccharomyces pombe (strain 972 / ATCC 24843) (Fission yeast).